The sequence spans 1131 residues: Replication factor C subunit 1 (1131 aa).

Disordered regions lie at residues 14 to 87 (KKPV…KSEK), 92 to 111 (YKPG…ETDE), 120 to 201 (AASK…NDEA), and 225 to 378 (ARTL…NYQA). Residues 38–54 (GVKEAKVNNSGKEDASK) show a composition bias toward basic and acidic residues. A Glycyl lysine isopeptide (Lys-Gly) (interchain with G-Cter in SUMO2) cross-link involves residue K49. The residue at position 66 (Y66) is a Phosphotyrosine. Residues S68, S70, S72, and S107 each carry the phosphoserine modification. T109 carries the phosphothreonine modification. Residues 127 to 138 (NGVSTNSYLGTS) show a composition bias toward polar residues. Residue S155 is modified to Phosphoserine. 2 positions are modified to phosphothreonine: T160 and T162. 8 positions are modified to phosphoserine: S163, S172, S189, S244, S250, S253, S281, and S309. A compositionally biased stretch (basic and acidic residues) spans 184-201 (KRKESSQNTEDSRLNDEA). The segment covering 308 to 319 (SSPKASAKLALM) has biased composition (low complexity). 2 stretches are compositionally biased toward basic and acidic residues: residues 334-350 (AARR…EKTT) and 359-373 (TKRE…EKKR). An interferon-stimulated-response-element binding region region spans residues 354–528 (TKVSPTKRES…KKESESKKCK (175 aa)). Phosphoserine is present on S365. In terms of domain architecture, BRCT spans 399–489 (GAENCLEGLT…PGKRSKYEMA (91 aa)). Positions 491-525 (EAEMKKEKSKLERTPQKNDQGKRKISPAKKESESK) are disordered. S535 carries the post-translational modification Phosphoserine. 635 to 642 (GPPGVGKT) lines the ATP pocket. The interval 1073-1131 (PALDSEYSEEFQEDDTQSEKEQDAVETDAMIKKKTRSSKPSKSEREKESKKGKGKNWKK) is disordered. Positions 1078 to 1088 (EYSEEFQEDDT) are enriched in acidic residues. Residue S1090 is modified to Phosphoserine. Residues 1104–1108 (KKKTR) carry the Nuclear localization signal motif. A compositionally biased stretch (basic and acidic residues) spans 1113-1123 (SKSEREKESKK).

It belongs to the activator 1 large subunit family. Large subunit of the RFC complex, an heteropentameric complex consisting of RFC1 and four small subunits RFC2, RFC3, RFC4 and RFC5; the RFC complex interacts with PCNA and the interaction involves RFC1.

The protein localises to the nucleus. In terms of biological role, subunit of the replication factor C (RFC) complex which acts during elongation of primed DNA templates by DNA polymerases delta and epsilon, and is necessary for ATP-dependent loading of proliferating cell nuclear antigen (PCNA) onto primed DNA. This subunit binds to the primer-template junction. Binds the PO-B transcription element as well as other GA rich DNA sequences. Can bind single- or double-stranded DNA. This chain is Replication factor C subunit 1 (Rfc1), found in Mus musculus (Mouse).